We begin with the raw amino-acid sequence, 721 residues long: 1,4-alpha-glucan branching enzyme GlgB (721 aa).

Asp400 functions as the Nucleophile in the catalytic mechanism. Catalysis depends on Glu453, which acts as the Proton donor.

This sequence belongs to the glycosyl hydrolase 13 family. GlgB subfamily. As to quaternary structure, monomer.

It catalyses the reaction Transfers a segment of a (1-&gt;4)-alpha-D-glucan chain to a primary hydroxy group in a similar glucan chain.. It participates in glycan biosynthesis; glycogen biosynthesis. In terms of biological role, catalyzes the formation of the alpha-1,6-glucosidic linkages in glycogen by scission of a 1,4-alpha-linked oligosaccharide from growing alpha-1,4-glucan chains and the subsequent attachment of the oligosaccharide to the alpha-1,6 position. The sequence is that of 1,4-alpha-glucan branching enzyme GlgB from Chlamydia felis (strain Fe/C-56) (Chlamydophila felis).